The primary structure comprises 100 residues: Large ribosomal subunit protein uL23 (100 aa).

Belongs to the universal ribosomal protein uL23 family. In terms of assembly, part of the 50S ribosomal subunit. Contacts protein L29, and trigger factor when it is bound to the ribosome.

Its function is as follows. One of the early assembly proteins it binds 23S rRNA. One of the proteins that surrounds the polypeptide exit tunnel on the outside of the ribosome. Forms the main docking site for trigger factor binding to the ribosome. This is Large ribosomal subunit protein uL23 from Kosmotoga olearia (strain ATCC BAA-1733 / DSM 21960 / TBF 19.5.1).